We begin with the raw amino-acid sequence, 225 residues long: Protein-L-isoaspartate O-methyltransferase (225 aa).

The active site involves Ser-75.

This sequence belongs to the methyltransferase superfamily. L-isoaspartyl/D-aspartyl protein methyltransferase family.

The protein localises to the cytoplasm. It carries out the reaction [protein]-L-isoaspartate + S-adenosyl-L-methionine = [protein]-L-isoaspartate alpha-methyl ester + S-adenosyl-L-homocysteine. Catalyzes the methyl esterification of L-isoaspartyl residues in peptides and proteins that result from spontaneous decomposition of normal L-aspartyl and L-asparaginyl residues. It plays a role in the repair and/or degradation of damaged proteins. In Xylella fastidiosa (strain 9a5c), this protein is Protein-L-isoaspartate O-methyltransferase.